A 120-amino-acid polypeptide reads, in one-letter code: UPF0231 protein Spro_4007 (120 aa).

The protein belongs to the UPF0231 family.

The protein is UPF0231 protein Spro_4007 of Serratia proteamaculans (strain 568).